The primary structure comprises 132 residues: NADH-quinone oxidoreductase subunit A (132 aa).

The next 3 membrane-spanning stretches (helical) occupy residues 14-34, 66-86, and 96-116; these read FFTF…ISWI, FYLV…LYAW, and IGFI…IYLI.

The protein belongs to the complex I subunit 3 family. As to quaternary structure, NDH-1 is composed of 13 different subunits. Subunits NuoA, H, J, K, L, M, N constitute the membrane sector of the complex.

It is found in the cell membrane. The enzyme catalyses a quinone + NADH + 5 H(+)(in) = a quinol + NAD(+) + 4 H(+)(out). NDH-1 shuttles electrons from NADH, via FMN and iron-sulfur (Fe-S) centers, to quinones in the respiratory chain. The immediate electron acceptor for the enzyme in this species is believed to be ubiquinone. Couples the redox reaction to proton translocation (for every two electrons transferred, four hydrogen ions are translocated across the cytoplasmic membrane), and thus conserves the redox energy in a proton gradient. The chain is NADH-quinone oxidoreductase subunit A from Buchnera aphidicola subsp. Baizongia pistaciae (strain Bp).